Reading from the N-terminus, the 529-residue chain is Bifunctional purine biosynthesis protein PurH (529 aa).

The 148-residue stretch at 2 to 149 folds into the MGS-like domain; it reads TDLSPVRRAL…KNHAFVNVVV (148 aa).

This sequence belongs to the PurH family.

The enzyme catalyses (6R)-10-formyltetrahydrofolate + 5-amino-1-(5-phospho-beta-D-ribosyl)imidazole-4-carboxamide = 5-formamido-1-(5-phospho-D-ribosyl)imidazole-4-carboxamide + (6S)-5,6,7,8-tetrahydrofolate. It carries out the reaction IMP + H2O = 5-formamido-1-(5-phospho-D-ribosyl)imidazole-4-carboxamide. It participates in purine metabolism; IMP biosynthesis via de novo pathway; 5-formamido-1-(5-phospho-D-ribosyl)imidazole-4-carboxamide from 5-amino-1-(5-phospho-D-ribosyl)imidazole-4-carboxamide (10-formyl THF route): step 1/1. The protein operates within purine metabolism; IMP biosynthesis via de novo pathway; IMP from 5-formamido-1-(5-phospho-D-ribosyl)imidazole-4-carboxamide: step 1/1. The sequence is that of Bifunctional purine biosynthesis protein PurH from Ruegeria pomeroyi (strain ATCC 700808 / DSM 15171 / DSS-3) (Silicibacter pomeroyi).